Consider the following 168-residue polypeptide: Fusaric acid resistance protein FusE (168 aa).

Involved in the resistance (detoxification) of the fungal toxin fusaric acid. In Burkholderia cepacia (Pseudomonas cepacia), this protein is Fusaric acid resistance protein FusE (fusE).